The chain runs to 187 residues: MSGGVKLIAGLGNPGDQYARTRHNVGAWFLETLAQQRNQSLAKENKFHGFVAKCNDYWLLKPTTFMNESGQAVAALARFYKIKPSEILIAHDELDFPAGDIRLKEGGGHGGHNGLRNIIQHLGSSDFYRLRIGINHPGHKDRVTPYVLSPPSENDRIAILAAIEKGLRLIPELVQGDFQKVMRELHS.

Residue tyrosine 18 participates in tRNA binding. The active-site Proton acceptor is histidine 23. 3 residues coordinate tRNA: phenylalanine 65, asparagine 67, and asparagine 113.

The protein belongs to the PTH family. Monomer.

It is found in the cytoplasm. It carries out the reaction an N-acyl-L-alpha-aminoacyl-tRNA + H2O = an N-acyl-L-amino acid + a tRNA + H(+). Its function is as follows. Hydrolyzes ribosome-free peptidyl-tRNAs (with 1 or more amino acids incorporated), which drop off the ribosome during protein synthesis, or as a result of ribosome stalling. Catalyzes the release of premature peptidyl moieties from peptidyl-tRNA molecules trapped in stalled 50S ribosomal subunits, and thus maintains levels of free tRNAs and 50S ribosomes. The polypeptide is Peptidyl-tRNA hydrolase (Coxiella burnetii (strain CbuG_Q212) (Coxiella burnetii (strain Q212))).